The primary structure comprises 343 residues: UDP-3-O-acylglucosamine N-acyltransferase (343 aa).

The active-site Proton acceptor is the His239.

This sequence belongs to the transferase hexapeptide repeat family. LpxD subfamily. In terms of assembly, homotrimer.

It carries out the reaction a UDP-3-O-[(3R)-3-hydroxyacyl]-alpha-D-glucosamine + a (3R)-hydroxyacyl-[ACP] = a UDP-2-N,3-O-bis[(3R)-3-hydroxyacyl]-alpha-D-glucosamine + holo-[ACP] + H(+). It participates in bacterial outer membrane biogenesis; LPS lipid A biosynthesis. Its function is as follows. Catalyzes the N-acylation of UDP-3-O-acylglucosamine using 3-hydroxyacyl-ACP as the acyl donor. Is involved in the biosynthesis of lipid A, a phosphorylated glycolipid that anchors the lipopolysaccharide to the outer membrane of the cell. This Vibrio parahaemolyticus serotype O3:K6 (strain RIMD 2210633) protein is UDP-3-O-acylglucosamine N-acyltransferase.